The sequence spans 609 residues: Proline--tRNA ligase (609 aa).

Belongs to the class-II aminoacyl-tRNA synthetase family. ProS type 1 subfamily. In terms of assembly, homodimer.

Its subcellular location is the cytoplasm. It carries out the reaction tRNA(Pro) + L-proline + ATP = L-prolyl-tRNA(Pro) + AMP + diphosphate. Catalyzes the attachment of proline to tRNA(Pro) in a two-step reaction: proline is first activated by ATP to form Pro-AMP and then transferred to the acceptor end of tRNA(Pro). As ProRS can inadvertently accommodate and process non-cognate amino acids such as alanine and cysteine, to avoid such errors it has two additional distinct editing activities against alanine. One activity is designated as 'pretransfer' editing and involves the tRNA(Pro)-independent hydrolysis of activated Ala-AMP. The other activity is designated 'posttransfer' editing and involves deacylation of mischarged Ala-tRNA(Pro). The misacylated Cys-tRNA(Pro) is not edited by ProRS. This Synechococcus sp. (strain JA-3-3Ab) (Cyanobacteria bacterium Yellowstone A-Prime) protein is Proline--tRNA ligase.